A 610-amino-acid polypeptide reads, in one-letter code: UvrABC system protein C (610 aa).

A GIY-YIG domain is found at 16 to 94 (SQPGVYSMYD…IKLYQPRYNV (79 aa)). In terms of domain architecture, UVR spans 204–239 (QQVLNQLVERMELASRALNFEDAAHARDQIQAVRRV).

It belongs to the UvrC family. As to quaternary structure, interacts with UvrB in an incision complex.

It localises to the cytoplasm. Its function is as follows. The UvrABC repair system catalyzes the recognition and processing of DNA lesions. UvrC both incises the 5' and 3' sides of the lesion. The N-terminal half is responsible for the 3' incision and the C-terminal half is responsible for the 5' incision. The sequence is that of UvrABC system protein C from Sodalis glossinidius (strain morsitans).